The chain runs to 380 residues: MDNFIVTLLFMAIIGAAIGGVTNHLAIKMLFRPHNAIYIKNWRVPFTPGLIPKRRDELAKQLGLTVVNYLLTPETFRKKFFSKDIQEKVEQFVQTKVEETIFTNDKTIQDWLNIAGFSHMPATIEQKVEAIVEGQFASVKNTLSTKSIRTLLSSDMQDTLDAKIPVAVSHILEKGEDYFLSPEGEMTIKAMIDDFLSSKGSFGGMINMFLGDSSSLVGKVQRELVKFLQAPGTSTLLTKIFTQEWEKLKDRPAMDFLQDMQFDPILSKLQMYVKEQLAVAERLNQPISYYWPEGNEWMKNSVIPQAIDKAFVKAEEKLEDVLKRLNLQEVVREQVDSFPVEKLEELVLGISKREFKMITVLGAVLGGLIGIVQGLIVNFI.

Transmembrane regions (helical) follow at residues 1 to 21 and 357 to 377; these read MDNFIVTLLFMAIIGAAIGGV and MITVLGAVLGGLIGIVQGLIV.

This sequence belongs to the UPF0754 family.

It is found in the cell membrane. This chain is UPF0754 membrane protein Bsph_0374, found in Lysinibacillus sphaericus (strain C3-41).